Here is a 327-residue protein sequence, read N- to C-terminus: Metal-binding protein YtgA (327 aa).

The signal sequence occupies residues 1–20; it reads MDAKMGYIFKVMRWIFCFVA. The Fe(2+) site is built by His73, His139, His205, and Asp297.

Belongs to the bacterial solute-binding protein 9 family. Monomer.

The protein resides in the periplasm. Functionally, part of the ATP-binding cassette (ABC) transport system YtgABCD involved in metal import. Binds Fe(2+), Mn(2+) and Ni(2+), with a preference for Fe(2+) and delivers them to the membrane permease for translocation into the cytoplasm. The sequence is that of Metal-binding protein YtgA from Chlamydia pneumoniae (Chlamydophila pneumoniae).